The sequence spans 361 residues: ETS translocation variant 3-like protein (361 aa).

A DNA-binding region (ETS) is located at residues 39 to 120 (IQLWHFILEL…KGKRFTYKFN (82 aa)). The interval 178-201 (LTGQQTPRGPPETSGDKKGSSSSV) is disordered.

The protein belongs to the ETS family.

It is found in the nucleus. In terms of biological role, transcriptional regulator. In Homo sapiens (Human), this protein is ETS translocation variant 3-like protein (ETV3L).